The primary structure comprises 3101 residues: Probable polyketide synthase 32 (3101 aa).

The 439-residue stretch at 27–465 (SGDVAVIGIG…GSNVCLILSE (439 aa)) folds into the Ketosynthase family 3 (KS3) domain. Catalysis depends on for beta-ketoacyl synthase activity residues Cys199, His338, and His388. Residues 664-697 (GVSADIIIGHSLGEVSSAYCSGMIDFETLCYLTY) are acyl/malonyl transferase. Catalysis depends on Ser674, which acts as the For acyl/malonyl transferase activity. The tract at residues 965–1087 (GPSINNLGNN…GNFSLTKHNS (123 aa)) is N-terminal hotdog fold. A PKS/mFAS DH domain is found at 965–1287 (GPSINNLGNN…CTLVSLPNPE (323 aa)). The Proton acceptor; for dehydratase activity role is filled by His999. The segment at 1104 to 1287 (NFTSISKQDL…CTLVSLPNPE (184 aa)) is C-terminal hotdog fold. Residue Asp1176 is the Proton donor; for dehydratase activity of the active site. Residues 1209–1236 (KNGNNNDDDEESNNNNNNNNNNNNNNNN) are disordered. The span at 1221–1236 (NNNNNNNNNNNNNNNN) shows a compositional bias: low complexity. The 78-residue stretch at 2550–2627 (DNNEIIRSTI…QSIEIIKSAN (78 aa)) folds into the Carrier domain. Residue Ser2587 is modified to O-(pantetheine 4'-phosphoryl)serine. Positions 2627-2648 (NNKNNKNNNNNNNNKTNKNNNN) are disordered.

It depends on pantetheine 4'-phosphate as a cofactor.

Its function is as follows. Probable polyketide synthase. In Dictyostelium discoideum (Social amoeba), this protein is Probable polyketide synthase 32 (pks32).